Here is a 275-residue protein sequence, read N- to C-terminus: Pantothenate synthetase (275 aa).

26 to 33 contacts ATP; the sequence is MGNLHDGH. The active-site Proton donor is the His-33. Gln-57 contributes to the (R)-pantoate binding site. Gln-57 serves as a coordination point for beta-alanine. 144–147 serves as a coordination point for ATP; sequence GKKD. Gln-150 contributes to the (R)-pantoate binding site. Residues Val-173 and 181-184 contribute to the ATP site; that span reads LSSR.

This sequence belongs to the pantothenate synthetase family. In terms of assembly, homodimer.

Its subcellular location is the cytoplasm. The catalysed reaction is (R)-pantoate + beta-alanine + ATP = (R)-pantothenate + AMP + diphosphate + H(+). Its pathway is cofactor biosynthesis; (R)-pantothenate biosynthesis; (R)-pantothenate from (R)-pantoate and beta-alanine: step 1/1. Its function is as follows. Catalyzes the condensation of pantoate with beta-alanine in an ATP-dependent reaction via a pantoyl-adenylate intermediate. In Azoarcus sp. (strain BH72), this protein is Pantothenate synthetase.